Consider the following 1029-residue polypeptide: Pro-apoptotic serine protease NMA111 (1029 aa).

A disordered region spans residues 1-49 (MNGPTSQRAKRKQGSASSLDDRPPKHQRALNGAKQQSTGDNTPEEDMYD). The serine protease stretch occupies residues 84–274 (VVSIRFCQTC…LPLDRPLRAL (191 aa)). Active-site charge relay system residues include His-122, Asp-153, and Ser-235. PDZ domains lie at 307–379 (PEWE…QRGG) and 845–958 (EFLG…VTFD). A disordered region spans residues 997–1029 (KAMEGEPSEGVPAVEEEAGGAVDDDVPMAAVEK). The segment covering 1010-1022 (VEEEAGGAVDDDV) has biased composition (acidic residues).

This sequence belongs to the peptidase S1C family.

The protein localises to the nucleus. Nuclear serine protease which mediates apoptosis. The sequence is that of Pro-apoptotic serine protease NMA111 (NMA111) from Pyricularia oryzae (strain 70-15 / ATCC MYA-4617 / FGSC 8958) (Rice blast fungus).